The chain runs to 463 residues: tRNA (guanine(10)-N(2))-methyltransferase TRMT11 (463 aa).

Position 2 is an N-acetylalanine (alanine 2).

Belongs to the class I-like SAM-binding methyltransferase superfamily. TRM11 methyltransferase family. In terms of assembly, part of the heterodimeric TRMT11-TRM112 methyltransferase complex; this complex forms an active tRNA methyltransferase, where TRMT112 acts as an activator of the catalytic subunit TRMT11.

It is found in the cytoplasm. The catalysed reaction is guanosine(10) in tRNA + S-adenosyl-L-methionine = N(2)-methylguanosine(10) in tRNA + S-adenosyl-L-homocysteine + H(+). Functionally, catalytic subunit of the TRMT11-TRM112 methyltransferase complex, that specifically mediates the S-adenosyl-L-methionine-dependent N(2)-methylation of guanosine nucleotide at position 10 (m2G10) in tRNAs. This is one of the major tRNA (guanine-N(2))-methyltransferases. This chain is tRNA (guanine(10)-N(2))-methyltransferase TRMT11, found in Homo sapiens (Human).